The primary structure comprises 278 residues: ATP-dependent dethiobiotin synthetase BioD 1 (278 aa).

An ATP-binding site is contributed by 51 to 56 (NVGKTI). Thr-55 contacts Mg(2+). The active site involves Lys-76. Asp-102 is an ATP binding site. The Mg(2+) site is built by Asp-102 and Glu-163. ATP-binding positions include 223 to 224 (NR) and 252 to 254 (PYI).

Belongs to the dethiobiotin synthetase family. In terms of assembly, homodimer. Requires Mg(2+) as cofactor.

The protein localises to the cytoplasm. The enzyme catalyses (7R,8S)-7,8-diammoniononanoate + CO2 + ATP = (4R,5S)-dethiobiotin + ADP + phosphate + 3 H(+). It functions in the pathway cofactor biosynthesis; biotin biosynthesis; biotin from 7,8-diaminononanoate: step 1/2. Functionally, catalyzes a mechanistically unusual reaction, the ATP-dependent insertion of CO2 between the N7 and N8 nitrogen atoms of 7,8-diaminopelargonic acid (DAPA, also called 7,8-diammoniononanoate) to form a ureido ring. In Haemophilus ducreyi (strain 35000HP / ATCC 700724), this protein is ATP-dependent dethiobiotin synthetase BioD 1.